The primary structure comprises 41 residues: Antifungal peptide 2 (41 aa).

Residue glutamine 1 is modified to Pyrrolidone carboxylic acid. 5 disulfide bridges follow: cysteine 3–cysteine 17, cysteine 7–cysteine 37, cysteine 11–cysteine 23, cysteine 16–cysteine 30, and cysteine 35–cysteine 39. Positions 4 to 41 (ASRCPRPCNAGLCCSIYGYCGSGAAYCGAGNCRCQCRG) constitute a Chitin-binding type-1 domain.

As to quaternary structure, monomer.

Has antifungal activity against P.infestans, A.lycopersici, V.dahliae, G.zeae, A.nicotianae, F.moniliforme, F.oxysporum and C.gossypii. This Eucommia ulmoides (Hardy rubber tree) protein is Antifungal peptide 2.